We begin with the raw amino-acid sequence, 132 residues long: Small ribosomal subunit protein uS13 (132 aa).

Residues 101-125 (RGLPVRGQRTKTNARTRKGPRKTVA) are compositionally biased toward basic residues. The tract at residues 101 to 132 (RGLPVRGQRTKTNARTRKGPRKTVANKKIETR) is disordered.

This sequence belongs to the universal ribosomal protein uS13 family. In terms of assembly, part of the 30S ribosomal subunit. Forms a loose heterodimer with protein S19. Forms two bridges to the 50S subunit in the 70S ribosome.

Functionally, located at the top of the head of the 30S subunit, it contacts several helices of the 16S rRNA. In the 70S ribosome it contacts the 23S rRNA (bridge B1a) and protein L5 of the 50S subunit (bridge B1b), connecting the 2 subunits; these bridges are implicated in subunit movement. Contacts the tRNAs in the A and P-sites. This chain is Small ribosomal subunit protein uS13, found in Ureaplasma parvum serovar 3 (strain ATCC 27815 / 27 / NCTC 11736).